The chain runs to 585 residues: Auxin response factor 17 (585 aa).

A DNA-binding region (TF-B3) is located at residues 119-221 (FAKILTPSDA…EMFIGVRRTP (103 aa)). Disordered stretches follow at residues 483–517 (EMMN…RGPL) and 535–585 (EHSE…SSQG). A compositionally biased stretch (low complexity) spans 488 to 510 (GSPPSDNLSPNSNTTNLSSGNDL). Residues 573–585 (KHSNSNAGSSSQG) show a composition bias toward polar residues.

Belongs to the ARF family. In terms of assembly, homo and heterodimers.

The protein resides in the nucleus. Auxin response factors (ARFs) are transcriptional factors that bind specifically to the DNA sequence 5'-TGTCTC-3' found in the auxin-responsive promoter elements (AuxREs). Could act as transcriptional activator or repressor. Formation of heterodimers with Aux/IAA proteins may alter their ability to modulate early auxin response genes expression. This is Auxin response factor 17 (ARF17) from Arabidopsis thaliana (Mouse-ear cress).